The following is a 713-amino-acid chain: Glutamine--fructose-6-phosphate aminotransferase [isomerizing] (713 aa).

Catalysis depends on Cys-2, which acts as the For GATase activity. Residues 2 to 316 form the Glutamine amidotransferase type-2 domain; sequence CGIFGYVNFL…DDDIAHIYDG (315 aa). 2 consecutive SIS domains span residues 389–528 and 561–703; these read WLST…DSIS and CNSS…VDFP.

As to quaternary structure, homotetramer.

The enzyme catalyses D-fructose 6-phosphate + L-glutamine = D-glucosamine 6-phosphate + L-glutamate. The protein operates within nucleotide-sugar biosynthesis; UDP-N-acetyl-alpha-D-glucosamine biosynthesis; alpha-D-glucosamine 6-phosphate from D-fructose 6-phosphate: step 1/1. In terms of biological role, involved in amino sugar synthesis (formation of chitin, supplies the amino sugars of asparagine-linked oligosaccharides of glycoproteins). In Candida albicans (strain SC5314 / ATCC MYA-2876) (Yeast), this protein is Glutamine--fructose-6-phosphate aminotransferase [isomerizing] (GFA1).